The following is a 289-amino-acid chain: Ribosomal RNA small subunit methyltransferase A (289 aa).

S-adenosyl-L-methionine is bound by residues Asn21, Leu23, Gly48, Glu69, Asp94, and Asn120.

The protein belongs to the class I-like SAM-binding methyltransferase superfamily. rRNA adenine N(6)-methyltransferase family. RsmA subfamily.

It is found in the cytoplasm. It catalyses the reaction adenosine(1518)/adenosine(1519) in 16S rRNA + 4 S-adenosyl-L-methionine = N(6)-dimethyladenosine(1518)/N(6)-dimethyladenosine(1519) in 16S rRNA + 4 S-adenosyl-L-homocysteine + 4 H(+). In terms of biological role, specifically dimethylates two adjacent adenosines (A1518 and A1519) in the loop of a conserved hairpin near the 3'-end of 16S rRNA in the 30S particle. May play a critical role in biogenesis of 30S subunits. The chain is Ribosomal RNA small subunit methyltransferase A from Actinobacillus pleuropneumoniae serotype 7 (strain AP76).